Here is a 97-residue protein sequence, read N- to C-terminus: Aspartyl/glutamyl-tRNA(Asn/Gln) amidotransferase subunit C (97 aa).

Belongs to the GatC family. As to quaternary structure, heterotrimer of A, B and C subunits.

It carries out the reaction L-glutamyl-tRNA(Gln) + L-glutamine + ATP + H2O = L-glutaminyl-tRNA(Gln) + L-glutamate + ADP + phosphate + H(+). It catalyses the reaction L-aspartyl-tRNA(Asn) + L-glutamine + ATP + H2O = L-asparaginyl-tRNA(Asn) + L-glutamate + ADP + phosphate + 2 H(+). Allows the formation of correctly charged Asn-tRNA(Asn) or Gln-tRNA(Gln) through the transamidation of misacylated Asp-tRNA(Asn) or Glu-tRNA(Gln) in organisms which lack either or both of asparaginyl-tRNA or glutaminyl-tRNA synthetases. The reaction takes place in the presence of glutamine and ATP through an activated phospho-Asp-tRNA(Asn) or phospho-Glu-tRNA(Gln). The sequence is that of Aspartyl/glutamyl-tRNA(Asn/Gln) amidotransferase subunit C from Prochlorococcus marinus (strain SARG / CCMP1375 / SS120).